Reading from the N-terminus, the 1328-residue chain is DNA-directed RNA polymerase subunit beta (1328 aa).

The protein belongs to the RNA polymerase beta chain family. As to quaternary structure, the RNAP catalytic core consists of 2 alpha, 1 beta, 1 beta' and 1 omega subunit. When a sigma factor is associated with the core the holoenzyme is formed, which can initiate transcription.

It catalyses the reaction RNA(n) + a ribonucleoside 5'-triphosphate = RNA(n+1) + diphosphate. In terms of biological role, DNA-dependent RNA polymerase catalyzes the transcription of DNA into RNA using the four ribonucleoside triphosphates as substrates. In Karelsulcia muelleri (strain GWSS) (Sulcia muelleri), this protein is DNA-directed RNA polymerase subunit beta.